We begin with the raw amino-acid sequence, 358 residues long: UDP-N-acetylglucosamine--N-acetylmuramyl-(pentapeptide) pyrophosphoryl-undecaprenol N-acetylglucosamine transferase (358 aa).

UDP-N-acetyl-alpha-D-glucosamine-binding positions include 11–13 (TGG), R163, S191, I245, and Q290.

The protein belongs to the glycosyltransferase 28 family. MurG subfamily.

The protein resides in the cell inner membrane. The enzyme catalyses di-trans,octa-cis-undecaprenyl diphospho-N-acetyl-alpha-D-muramoyl-L-alanyl-D-glutamyl-meso-2,6-diaminopimeloyl-D-alanyl-D-alanine + UDP-N-acetyl-alpha-D-glucosamine = di-trans,octa-cis-undecaprenyl diphospho-[N-acetyl-alpha-D-glucosaminyl-(1-&gt;4)]-N-acetyl-alpha-D-muramoyl-L-alanyl-D-glutamyl-meso-2,6-diaminopimeloyl-D-alanyl-D-alanine + UDP + H(+). Its pathway is cell wall biogenesis; peptidoglycan biosynthesis. Cell wall formation. Catalyzes the transfer of a GlcNAc subunit on undecaprenyl-pyrophosphoryl-MurNAc-pentapeptide (lipid intermediate I) to form undecaprenyl-pyrophosphoryl-MurNAc-(pentapeptide)GlcNAc (lipid intermediate II). The polypeptide is UDP-N-acetylglucosamine--N-acetylmuramyl-(pentapeptide) pyrophosphoryl-undecaprenol N-acetylglucosamine transferase (Herminiimonas arsenicoxydans).